The following is a 328-amino-acid chain: Tetraacyldisaccharide 4'-kinase (328 aa).

55–62 (TAGGNGKT) contributes to the ATP binding site.

The protein belongs to the LpxK family.

The catalysed reaction is a lipid A disaccharide + ATP = a lipid IVA + ADP + H(+). It participates in glycolipid biosynthesis; lipid IV(A) biosynthesis; lipid IV(A) from (3R)-3-hydroxytetradecanoyl-[acyl-carrier-protein] and UDP-N-acetyl-alpha-D-glucosamine: step 6/6. Functionally, transfers the gamma-phosphate of ATP to the 4'-position of a tetraacyldisaccharide 1-phosphate intermediate (termed DS-1-P) to form tetraacyldisaccharide 1,4'-bis-phosphate (lipid IVA). The sequence is that of Tetraacyldisaccharide 4'-kinase from Yersinia enterocolitica serotype O:8 / biotype 1B (strain NCTC 13174 / 8081).